We begin with the raw amino-acid sequence, 497 residues long: Bifunctional protein GlmU (497 aa).

A pyrophosphorylase region spans residues 1–252; the sequence is MSQPSARPSA…VWEVEGANDR (252 aa). UDP-N-acetyl-alpha-D-glucosamine contacts are provided by residues 14 to 17, lysine 28, glutamine 86, 91 to 92, 115 to 117, glycine 154, glutamate 169, asparagine 192, and asparagine 250; these read LAAG, GT, and YGD. Residue aspartate 117 coordinates Mg(2+). Asparagine 250 provides a ligand contact to Mg(2+). The linker stretch occupies residues 253–273; the sequence is RQLSDLGRRLNERVLRHWMKE. An N-acetyltransferase region spans residues 274-497; that stretch reads GVTVVDPSST…AGAEGSGAQG (224 aa). The UDP-N-acetyl-alpha-D-glucosamine site is built by arginine 355 and lysine 373. Histidine 385 (proton acceptor) is an active-site residue. Residues tyrosine 388 and asparagine 399 each coordinate UDP-N-acetyl-alpha-D-glucosamine. Residues 408-409, serine 427, and alanine 445 each bind acetyl-CoA; that span reads NY. The interval 473–497 is disordered; the sequence is PAKRPGTSSAEAARAAGAEGSGAQG. The segment covering 480 to 490 has biased composition (low complexity); that stretch reads SSAEAARAAGA.

In the N-terminal section; belongs to the N-acetylglucosamine-1-phosphate uridyltransferase family. This sequence in the C-terminal section; belongs to the transferase hexapeptide repeat family. In terms of assembly, homotrimer. Requires Mg(2+) as cofactor.

The protein resides in the cytoplasm. It carries out the reaction alpha-D-glucosamine 1-phosphate + acetyl-CoA = N-acetyl-alpha-D-glucosamine 1-phosphate + CoA + H(+). The catalysed reaction is N-acetyl-alpha-D-glucosamine 1-phosphate + UTP + H(+) = UDP-N-acetyl-alpha-D-glucosamine + diphosphate. The protein operates within nucleotide-sugar biosynthesis; UDP-N-acetyl-alpha-D-glucosamine biosynthesis; N-acetyl-alpha-D-glucosamine 1-phosphate from alpha-D-glucosamine 6-phosphate (route II): step 2/2. It functions in the pathway nucleotide-sugar biosynthesis; UDP-N-acetyl-alpha-D-glucosamine biosynthesis; UDP-N-acetyl-alpha-D-glucosamine from N-acetyl-alpha-D-glucosamine 1-phosphate: step 1/1. Its pathway is bacterial outer membrane biogenesis; LPS lipid A biosynthesis. Its function is as follows. Catalyzes the last two sequential reactions in the de novo biosynthetic pathway for UDP-N-acetylglucosamine (UDP-GlcNAc). The C-terminal domain catalyzes the transfer of acetyl group from acetyl coenzyme A to glucosamine-1-phosphate (GlcN-1-P) to produce N-acetylglucosamine-1-phosphate (GlcNAc-1-P), which is converted into UDP-GlcNAc by the transfer of uridine 5-monophosphate (from uridine 5-triphosphate), a reaction catalyzed by the N-terminal domain. The sequence is that of Bifunctional protein GlmU from Micrococcus luteus (strain ATCC 4698 / DSM 20030 / JCM 1464 / CCM 169 / CCUG 5858 / IAM 1056 / NBRC 3333 / NCIMB 9278 / NCTC 2665 / VKM Ac-2230) (Micrococcus lysodeikticus).